We begin with the raw amino-acid sequence, 112 residues long: Cuticle protein AM1239 (112 aa).

Positions 16 to 85 (DGNFNYRFET…FIPTDHPLPA (70 aa)) constitute a Chitin-binding type R&amp;R domain. Residue T79 is glycosylated (O-linked (HexNAc) threonine).

As to expression, arthrodial membrane.

The chain is Cuticle protein AM1239 from Cancer pagurus (Rock crab).